We begin with the raw amino-acid sequence, 809 residues long: Carbon monoxide dehydrogenase large chain (809 aa).

Cysteine 388 provides a ligand contact to Cu(+). Glutamate 763 lines the Mo-molybdopterin cytosine dinucleotide pocket.

As to quaternary structure, dimer of heterotrimers. Each heterotrimer consists of a large, a medium and a small subunit. Requires Cu(+) as cofactor. Mo-molybdopterin cytosine dinucleotide serves as cofactor.

It catalyses the reaction CO + a quinone + H2O = a quinol + CO2. Functionally, catalyzes the oxidation of carbon monoxide to carbon dioxide. This Afipia carboxidovorans (strain ATCC 49405 / DSM 1227 / KCTC 32145 / OM5) (Oligotropha carboxidovorans) protein is Carbon monoxide dehydrogenase large chain (coxL).